Reading from the N-terminus, the 652-residue chain is O-fucosyltransferase 15 (652 aa).

Residues 91-111 (TAAFVIVLVGFFIFVNWFMLS) traverse the membrane as a helical; Signal-anchor for type II membrane protein segment. N-linked (GlcNAc...) asparagine glycosylation is found at asparagine 139, asparagine 169, and asparagine 251. Substrate is bound at residue 426-428 (HLR). N-linked (GlcNAc...) asparagine glycosylation is found at asparagine 464, asparagine 546, and asparagine 607.

This sequence belongs to the glycosyltransferase GT106 family.

It localises to the membrane. Its pathway is glycan metabolism. This is O-fucosyltransferase 15 from Arabidopsis thaliana (Mouse-ear cress).